Here is a 457-residue protein sequence, read N- to C-terminus: NADH-quinone oxidoreductase subunit N (457 aa).

14 helical membrane passes run 2 to 22, 25 to 45, 60 to 80, 92 to 112, 114 to 134, 149 to 169, 188 to 208, 222 to 242, 253 to 273, 283 to 303, 310 to 330, 353 to 373, 382 to 402, and 431 to 451; these read NAII…FIGL, LIYP…ACTF, NYSV…FILF, GDHY…VSFS, MSML…LAGS, FILG…IYGA, FFIG…AVPF, FITA…FYLM, YLSH…NIAA, LAFS…ILTI, FVYL…VQVV, AFVL…AGFF, VIHA…LISV, and VILA…DILL.

This sequence belongs to the complex I subunit 2 family. As to quaternary structure, NDH-1 is composed of 14 different subunits. Subunits NuoA, H, J, K, L, M, N constitute the membrane sector of the complex.

It localises to the cell inner membrane. It carries out the reaction a quinone + NADH + 5 H(+)(in) = a quinol + NAD(+) + 4 H(+)(out). Functionally, NDH-1 shuttles electrons from NADH, via FMN and iron-sulfur (Fe-S) centers, to quinones in the respiratory chain. The immediate electron acceptor for the enzyme in this species is believed to be a menaquinone. Couples the redox reaction to proton translocation (for every two electrons transferred, four hydrogen ions are translocated across the cytoplasmic membrane), and thus conserves the redox energy in a proton gradient. The protein is NADH-quinone oxidoreductase subunit N of Cytophaga hutchinsonii (strain ATCC 33406 / DSM 1761 / CIP 103989 / NBRC 15051 / NCIMB 9469 / D465).